Here is a 316-residue protein sequence, read N- to C-terminus: Annexin A13 (316 aa).

Residue glycine 2 is the site of N-myristoyl glycine attachment. 4 Annexin repeats span residues 14-85, 86-157, 169-241, and 245-316; these read FDVD…ALLD, RPSE…SLLQ, DLAG…TLVR, and DQEG…ALLH.

This sequence belongs to the annexin family. In terms of assembly, monomer and homodimer. Detected in intestine, and at much lower levels also in kidney (at protein level).

The protein localises to the apical cell membrane. It is found in the cell membrane. Its subcellular location is the cytoplasmic vesicle. Its function is as follows. Binds to membranes enriched in phosphatidylserine or phosphatidylglycerol in a calcium-dependent manner. Half-maximal membrane binding requires about 60 uM calcium. Does not bind to membranes that lack phospholipids with an acidic headgroup. Binds to membranes enriched in phosphatidylserine or phosphatidylglycerol in a calcium-dependent manner, but requires higher calcium levels for membrane binding than isoform A. Half-maximal membrane binding requires about 320 uM calcium. May play a role in vesicular traffic to the apical plasma membrane. In Canis lupus familiaris (Dog), this protein is Annexin A13 (ANXA13).